Consider the following 164-residue polypeptide: Cyclic pyranopterin monophosphate synthase (164 aa).

Residues 77 to 79 and 115 to 116 each bind substrate; these read LCH and ME. The active site involves Asp130.

This sequence belongs to the MoaC family. As to quaternary structure, homohexamer; trimer of dimers.

The enzyme catalyses (8S)-3',8-cyclo-7,8-dihydroguanosine 5'-triphosphate = cyclic pyranopterin phosphate + diphosphate. It functions in the pathway cofactor biosynthesis; molybdopterin biosynthesis. Functionally, catalyzes the conversion of (8S)-3',8-cyclo-7,8-dihydroguanosine 5'-triphosphate to cyclic pyranopterin monophosphate (cPMP). The chain is Cyclic pyranopterin monophosphate synthase from Sinorhizobium medicae (strain WSM419) (Ensifer medicae).